A 428-amino-acid chain; its full sequence is Ribosomal RNA small subunit methyltransferase B (428 aa).

S-adenosyl-L-methionine is bound by residues 253–259, Asp-276, Asp-302, and Asp-321; that span reads CAAPGGK. Residue Cys-374 is the Nucleophile of the active site.

This sequence belongs to the class I-like SAM-binding methyltransferase superfamily. RsmB/NOP family.

The protein resides in the cytoplasm. The enzyme catalyses cytidine(967) in 16S rRNA + S-adenosyl-L-methionine = 5-methylcytidine(967) in 16S rRNA + S-adenosyl-L-homocysteine + H(+). In terms of biological role, specifically methylates the cytosine at position 967 (m5C967) of 16S rRNA. The chain is Ribosomal RNA small subunit methyltransferase B from Enterobacter sp. (strain 638).